The primary structure comprises 395 residues: Probable G-protein coupled receptor npr-29 (395 aa).

4 helical membrane-spanning segments follow: residues Val-38–Pro-58, Ile-66–Leu-86, Ile-89–Phe-109, and Ala-148–Ala-168. Asn-180 is a glycosylation site (N-linked (GlcNAc...) asparagine). A run of 3 helical transmembrane segments spans residues Phe-202 to Tyr-222, Val-252 to Val-272, and Ile-287 to Leu-307.

This sequence belongs to the G-protein coupled receptor 1 family.

The protein localises to the cell membrane. Not known. Putative receptor. This is Probable G-protein coupled receptor npr-29 from Caenorhabditis elegans.